The sequence spans 2110 residues: Protein Ycf2 (2110 aa).

The segment at 190–209 (DSSQLKGSSDQSRDPLDSIS) is disordered. 1442–1449 (GSIGTGRS) contributes to the ATP binding site.

It belongs to the Ycf2 family.

The protein localises to the plastid. The protein resides in the chloroplast stroma. Probable ATPase of unknown function. Its presence in a non-photosynthetic plant (Epifagus virginiana) and experiments in tobacco indicate that it has an essential function which is probably not related to photosynthesis. The chain is Protein Ycf2 from Panax ginseng (Korean ginseng).